We begin with the raw amino-acid sequence, 380 residues long: Cobalt-precorrin-5B C(1)-methyltransferase (380 aa).

This sequence belongs to the CbiD family.

It catalyses the reaction Co-precorrin-5B + S-adenosyl-L-methionine = Co-precorrin-6A + S-adenosyl-L-homocysteine. The protein operates within cofactor biosynthesis; adenosylcobalamin biosynthesis; cob(II)yrinate a,c-diamide from sirohydrochlorin (anaerobic route): step 6/10. Catalyzes the methylation of C-1 in cobalt-precorrin-5B to form cobalt-precorrin-6A. This chain is Cobalt-precorrin-5B C(1)-methyltransferase, found in Methanosphaera stadtmanae (strain ATCC 43021 / DSM 3091 / JCM 11832 / MCB-3).